Consider the following 333-residue polypeptide: Procathepsin L (333 aa).

An N-terminal signal peptide occupies residues 1 to 17; that stretch reads MNPTFILAALCLGIASA. Residues 18–113 constitute a propeptide, activation peptide; it reads TLTFNHSLEA…KVFQEPLFYE (96 aa). Residue Glu122 participates in Zn(2+) binding. 2 disulfides stabilise this stretch: Cys135/Cys178 and Cys169/Cys211. Residue Cys138 is part of the active site. Zn(2+)-binding residues include Glu163, Asp184, Glu199, Glu205, Glu209, Asp227, Asp250, His253, Asp273, and Asp275. Cys269 and Cys322 are disulfide-bonded. His276 is a catalytic residue. Positions 289-291 are excised as a propeptide; that stretch reads ESD. Residue Asn300 is part of the active site.

It belongs to the peptidase C1 family. Dimer of a heavy and a light chain linked by disulfide bonds. Interacts with Long isoform of CD74/Ii chain; the interaction stabilizes the conformation of mature CTSL. During export along the endocytic pathway, pro-CTSL undergoes several proteolytic cleavages to generate the CTSL single-chain and two-chain mature forms, composed of a heavy chain linked to a light chain by disulfide bonds. Autocleavage; produces the single-chain CTSL after cleavage of the propeptide. The cleavage can be intermolecular.

The protein resides in the lysosome. Its subcellular location is the apical cell membrane. It is found in the cytoplasmic vesicle. It localises to the secretory vesicle. The protein localises to the chromaffin granule. The protein resides in the secreted. Its subcellular location is the extracellular space. It carries out the reaction Specificity close to that of papain. As compared to cathepsin B, cathepsin L exhibits higher activity toward protein substrates, but has little activity on Z-Arg-Arg-NHMec, and no peptidyl-dipeptidase activity.. Inhibited by the propeptide produced by autocleavage. Long isoform of CD74/Ii chain stabilizes the conformation of mature CTSL by binding to its active site and serving as a chaperone to help maintain a pool of mature enzyme in endocytic compartments and extracellular space of APCs. IFNG enhances the conversion into the CTSL mature and active form. Inhibited by CST6. Inhibited by the glycopeptide antibiotic teicoplanin. Inhibited by amantadine. In terms of biological role, thiol protease important for the overall degradation of proteins in lysosomes. Plays a critical for normal cellular functions such as general protein turnover, antigen processing and bone remodeling. Involved in the solubilization of cross-linked TG/thyroglobulin and in the subsequent release of thyroid hormone thyroxine (T4) by limited proteolysis of TG/thyroglobulin in the thyroid follicle lumen. In neuroendocrine chromaffin cells secretory vesicles, catalyzes the prohormone proenkephalin processing to the active enkephalin peptide neurotransmitter. In thymus, regulates CD4(+) T cell positive selection by generating the major histocompatibility complex class II (MHCII) bound peptide ligands presented by cortical thymic epithelial cells. Also mediates invariant chain processing in cortical thymic epithelial cells. Major elastin-degrading enzyme at neutral pH. Accumulates as a mature and active enzyme in the extracellular space of antigen presenting cells (APCs) to regulate degradation of the extracellular matrix in the course of inflammation. Secreted form generates endostatin from COL18A1. Critical for cardiac morphology and function. Plays an important role in hair follicle morphogenesis and cycling, as well as epidermal differentiation. Required for maximal stimulation of steroidogenesis by TIMP1. This chain is Procathepsin L (CTSL), found in Chlorocebus aethiops (Green monkey).